The primary structure comprises 342 residues: Tetraacyldisaccharide 4'-kinase (342 aa).

An ATP-binding site is contributed by 68 to 75 (TVGGTGKT).

This sequence belongs to the LpxK family.

The catalysed reaction is a lipid A disaccharide + ATP = a lipid IVA + ADP + H(+). It functions in the pathway glycolipid biosynthesis; lipid IV(A) biosynthesis; lipid IV(A) from (3R)-3-hydroxytetradecanoyl-[acyl-carrier-protein] and UDP-N-acetyl-alpha-D-glucosamine: step 6/6. In terms of biological role, transfers the gamma-phosphate of ATP to the 4'-position of a tetraacyldisaccharide 1-phosphate intermediate (termed DS-1-P) to form tetraacyldisaccharide 1,4'-bis-phosphate (lipid IVA). The chain is Tetraacyldisaccharide 4'-kinase from Burkholderia ambifaria (strain MC40-6).